A 144-amino-acid polypeptide reads, in one-letter code: 3-hydroxyacyl-[acyl-carrier-protein] dehydratase FabZ (144 aa).

His-51 is a catalytic residue.

It belongs to the thioester dehydratase family. FabZ subfamily.

It localises to the cytoplasm. It carries out the reaction a (3R)-hydroxyacyl-[ACP] = a (2E)-enoyl-[ACP] + H2O. In terms of biological role, involved in unsaturated fatty acids biosynthesis. Catalyzes the dehydration of short chain beta-hydroxyacyl-ACPs and long chain saturated and unsaturated beta-hydroxyacyl-ACPs. This Clostridium botulinum (strain ATCC 19397 / Type A) protein is 3-hydroxyacyl-[acyl-carrier-protein] dehydratase FabZ.